The sequence spans 259 residues: Haloacid dehalogenase-like hydrolase domain-containing protein 2 (259 aa).

2 residues coordinate Mg(2+): Asp-13 and Ser-15. Residues 13 to 15 and 46 to 47 contribute to the substrate site; these read DLS and TN. Residues 47–71 adopt a coiled-coil conformation; the sequence is NTTKESKQDLLERLKKLEFDISEDE. The residue at position 50 (Lys-50) is an N6-succinyllysine. Lys-179 lines the substrate pocket. Residue Asp-204 coordinates Mg(2+).

Belongs to the HAD-like hydrolase superfamily. Mg(2+) is required as a cofactor.

The polypeptide is Haloacid dehalogenase-like hydrolase domain-containing protein 2 (HDHD2) (Bos taurus (Bovine)).